A 667-amino-acid polypeptide reads, in one-letter code: Acetolactate synthase 1, chloroplastic (667 aa).

The span at 1–35 shows a compositional bias: low complexity; that stretch reads MAAAAPSPSSSAFSKTLSPSSSTSSTLLPRSTFPF. Residues 1–45 form a disordered region; that stretch reads MAAAAPSPSSSAFSKTLSPSSSTSSTLLPRSTFPFPHHPHKTTPP. A chloroplast-targeting transit peptide spans 1-94; the sequence is MAAAAPSPSS…VSRFAPDEPR (94 aa). Glu-141 is a thiamine diphosphate binding site. The cysteines at positions 161 and 307 are disulfide-linked. Residues Arg-243, 349–370, and 392–411 each bind FAD; these read HGTV…FGVR and DIDS…ICAD. The thiamine pyrophosphate binding stretch occupies residues 484-564; the sequence is QHQMWAAQYY…VKIMLLNNQH (81 aa). 2 residues coordinate Mg(2+): Asp-535 and Asn-562.

The protein belongs to the TPP enzyme family. Mg(2+) is required as a cofactor. It depends on thiamine diphosphate as a cofactor.

The protein resides in the plastid. Its subcellular location is the chloroplast. It carries out the reaction 2 pyruvate + H(+) = (2S)-2-acetolactate + CO2. The protein operates within amino-acid biosynthesis; L-isoleucine biosynthesis; L-isoleucine from 2-oxobutanoate: step 1/4. It participates in amino-acid biosynthesis; L-valine biosynthesis; L-valine from pyruvate: step 1/4. This Nicotiana tabacum (Common tobacco) protein is Acetolactate synthase 1, chloroplastic (ALS SURA).